We begin with the raw amino-acid sequence, 336 residues long: Phenylalanine--tRNA ligase alpha subunit (336 aa).

E259 is a binding site for Mg(2+).

The protein belongs to the class-II aminoacyl-tRNA synthetase family. Phe-tRNA synthetase alpha subunit type 1 subfamily. In terms of assembly, tetramer of two alpha and two beta subunits. Mg(2+) serves as cofactor.

The protein localises to the cytoplasm. It catalyses the reaction tRNA(Phe) + L-phenylalanine + ATP = L-phenylalanyl-tRNA(Phe) + AMP + diphosphate + H(+). This chain is Phenylalanine--tRNA ligase alpha subunit, found in Tropheryma whipplei (strain TW08/27) (Whipple's bacillus).